We begin with the raw amino-acid sequence, 111 residues long: uncharacterized protein (111 aa).

The protein resides in the mitochondrion. This is an uncharacterized protein from Arabidopsis thaliana (Mouse-ear cress).